Reading from the N-terminus, the 594-residue chain is Membrane protein insertase YidC (594 aa).

Residues 7–27 form a helical membrane-spanning segment; sequence YFVAIALSVLILIAWQFFYVS. The interval 36-73 is disordered; that stretch reads AAEQAQQAQQTQQQPGAQPAAPGQALPGGAIPSAGESR. Residues 37–65 show a composition bias toward low complexity; that stretch reads AEQAQQAQQTQQQPGAQPAAPGQALPGGA. A run of 4 helical transmembrane segments spans residues 369 to 389, 443 to 463, 488 to 508, and 532 to 552; these read LFGN…LIFF, WPIL…YVTI, LFGL…WPII, and FTWM…GLVI.

Belongs to the OXA1/ALB3/YidC family. Type 1 subfamily. Interacts with the Sec translocase complex via SecD. Specifically interacts with transmembrane segments of nascent integral membrane proteins during membrane integration.

It is found in the cell inner membrane. In terms of biological role, required for the insertion and/or proper folding and/or complex formation of integral membrane proteins into the membrane. Involved in integration of membrane proteins that insert both dependently and independently of the Sec translocase complex, as well as at least some lipoproteins. Aids folding of multispanning membrane proteins. The polypeptide is Membrane protein insertase YidC (Rhizobium meliloti (strain 1021) (Ensifer meliloti)).